The primary structure comprises 208 residues: Putative chemokine-related protein FP248 (208 aa).

Residues M1–S23 form the signal peptide. N-linked (GlcNAc...) asparagine glycosylation is present at N29.

It localises to the secreted. This is Putative chemokine-related protein FP248 from Homo sapiens (Human).